The sequence spans 422 residues: L-threonine dehydratase biosynthetic IlvA (422 aa).

At lysine 56 the chain carries N6-(pyridoxal phosphate)lysine. Residues asparagine 83, 189–193 (GGGGL), and serine 315 each bind pyridoxal 5'-phosphate. In terms of domain architecture, ACT-like spans 339–413 (HYFILNFPQR…FDPSNIYINE (75 aa)).

This sequence belongs to the serine/threonine dehydratase family. Homotetramer. Requires pyridoxal 5'-phosphate as cofactor.

The enzyme catalyses L-threonine = 2-oxobutanoate + NH4(+). Its pathway is amino-acid biosynthesis; L-isoleucine biosynthesis; 2-oxobutanoate from L-threonine: step 1/1. Its function is as follows. Catalyzes the anaerobic formation of alpha-ketobutyrate and ammonia from threonine in a two-step reaction. The first step involved a dehydration of threonine and a production of enamine intermediates (aminocrotonate), which tautomerizes to its imine form (iminobutyrate). Both intermediates are unstable and short-lived. The second step is the nonenzymatic hydrolysis of the enamine/imine intermediates to form 2-ketobutyrate and free ammonia. In the low water environment of the cell, the second step is accelerated by RidA. The sequence is that of L-threonine dehydratase biosynthetic IlvA (ilvA) from Staphylococcus epidermidis (strain ATCC 12228 / FDA PCI 1200).